The primary structure comprises 273 residues: 3-methyl-2-oxobutanoate hydroxymethyltransferase 1 (273 aa).

Residues Asp-49 and Asp-88 each coordinate Mg(2+). 3-methyl-2-oxobutanoate is bound by residues 49 to 50 (DS), Asp-88, and Lys-118. Mg(2+) is bound at residue Glu-120. Glu-187 functions as the Proton acceptor in the catalytic mechanism.

This sequence belongs to the PanB family. In terms of assembly, homodecamer; pentamer of dimers. The cofactor is Mg(2+).

It is found in the cytoplasm. The enzyme catalyses 3-methyl-2-oxobutanoate + (6R)-5,10-methylene-5,6,7,8-tetrahydrofolate + H2O = 2-dehydropantoate + (6S)-5,6,7,8-tetrahydrofolate. Its pathway is cofactor biosynthesis; (R)-pantothenate biosynthesis; (R)-pantoate from 3-methyl-2-oxobutanoate: step 1/2. Functionally, catalyzes the reversible reaction in which hydroxymethyl group from 5,10-methylenetetrahydrofolate is transferred onto alpha-ketoisovalerate to form ketopantoate. The polypeptide is 3-methyl-2-oxobutanoate hydroxymethyltransferase 1 (Pseudomonas aeruginosa (strain UCBPP-PA14)).